A 165-amino-acid polypeptide reads, in one-letter code: MEKALVGITWEFVFQIVNTFIIFLLLRKLLFKPVLNIIESRENDIKSDLAEGEKAKNEGLALKKEYESKINFAKDEGQEIIKQATIRAEQKSDDIVNTAKKDALDIKEKANKDIEQERQKVINEIKNDISNIALLAASKVIEKDLDKSKHEELIENFIKEVGEAK.

Residues 5 to 25 form a helical membrane-spanning segment; sequence LVGITWEFVFQIVNTFIIFLL.

This sequence belongs to the ATPase B chain family. F-type ATPases have 2 components, F(1) - the catalytic core - and F(0) - the membrane proton channel. F(1) has five subunits: alpha(3), beta(3), gamma(1), delta(1), epsilon(1). F(0) has three main subunits: a(1), b(2) and c(10-14). The alpha and beta chains form an alternating ring which encloses part of the gamma chain. F(1) is attached to F(0) by a central stalk formed by the gamma and epsilon chains, while a peripheral stalk is formed by the delta and b chains.

The protein resides in the cell membrane. In terms of biological role, f(1)F(0) ATP synthase produces ATP from ADP in the presence of a proton or sodium gradient. F-type ATPases consist of two structural domains, F(1) containing the extramembraneous catalytic core and F(0) containing the membrane proton channel, linked together by a central stalk and a peripheral stalk. During catalysis, ATP synthesis in the catalytic domain of F(1) is coupled via a rotary mechanism of the central stalk subunits to proton translocation. Component of the F(0) channel, it forms part of the peripheral stalk, linking F(1) to F(0). The chain is ATP synthase subunit b from Clostridioides difficile (strain 630) (Peptoclostridium difficile).